Reading from the N-terminus, the 197-residue chain is Probable molybdenum cofactor guanylyltransferase (197 aa).

GTP is bound by residues L9–G11, K21, D65, and D94. Position 94 (D94) interacts with Mg(2+).

This sequence belongs to the MobA family. Mg(2+) is required as a cofactor.

The protein resides in the cytoplasm. It catalyses the reaction Mo-molybdopterin + GTP + H(+) = Mo-molybdopterin guanine dinucleotide + diphosphate. Its function is as follows. Transfers a GMP moiety from GTP to Mo-molybdopterin (Mo-MPT) cofactor (Moco or molybdenum cofactor) to form Mo-molybdopterin guanine dinucleotide (Mo-MGD) cofactor. In Carboxydothermus hydrogenoformans (strain ATCC BAA-161 / DSM 6008 / Z-2901), this protein is Probable molybdenum cofactor guanylyltransferase.